The primary structure comprises 603 residues: Thread biopolymer filament subunit gamma (603 aa).

The segment at 1–191 is head; the sequence is MASHSSVSYR…ENETMEEELK (191 aa). An IF rod domain is found at 158–476; sequence VKNILGTLNQ…KLLEGQELMV (319 aa). Residues 193–227 form a coil 1A region; the sequence is LTGGVPMSPDSTVNLENVETQVTEMLTEVSNLTLE. The tract at residues 228 to 240 is linker 1; the sequence is RVRLEIDVDHLRA. The coil 1B stretch occupies residues 241 to 341; the sequence is TADEIKSKYE…DALNVMREEY (101 aa). Positions 342–362 are linker 12; sequence QQVVTKNVQEAETYCKMQIDQ. Residues 363–381 are coil 2A; sequence IQGISTQTTEQISILDKEI. The linker 2 stretch occupies residues 382 to 389; the sequence is NTLEKELQ. Positions 390 to 510 are coil 2B; that stretch reads PLNVEYQRLL…SSVGYGASST (121 aa). The segment at 511-603 is tail; sequence TLGAISGGYS…GHDSTIILQQ (93 aa). Low complexity predominate over residues 562 to 587; the sequence is SSSGGHSMYSSSSMKRSSSKSASASA. Residues 562–603 form a disordered region; the sequence is SSSGGHSMYSSSSMKRSSSKSASASAGGYGTSGHDSTIILQQ.

The protein belongs to the intermediate filament family. As to quaternary structure, coiled-coil heterodimer of an alpha and a gamma subunit. Assemble into 10 nm filaments. Forms a massive, conical, intermediate filament biopolymer of approximately 60 cm.

It is found in the secreted. The protein resides in the extracellular space. In terms of biological role, released extracellularly into seawater and provides physical and biological defense against invasive organism by modulation of the viscoelastic properties of mucus. The protein is Thread biopolymer filament subunit gamma of Eptatretus stoutii (Pacific hagfish).